The chain runs to 171 residues: Ribosome maturation factor RimM (171 aa).

Positions 97–169 constitute a PRC barrel domain; it reads DGEFYYHEII…RVDVSIMEGL (73 aa).

This sequence belongs to the RimM family. In terms of assembly, binds ribosomal protein uS19.

The protein localises to the cytoplasm. Its function is as follows. An accessory protein needed during the final step in the assembly of 30S ribosomal subunit, possibly for assembly of the head region. Essential for efficient processing of 16S rRNA. May be needed both before and after RbfA during the maturation of 16S rRNA. It has affinity for free ribosomal 30S subunits but not for 70S ribosomes. The chain is Ribosome maturation factor RimM from Lactococcus lactis subsp. lactis (strain IL1403) (Streptococcus lactis).